The sequence spans 308 residues: HPr kinase/phosphorylase (308 aa).

Catalysis depends on residues His138 and Lys159. Position 153–160 (153–160 (GESGLGKS)) interacts with ATP. Residue Ser160 participates in Mg(2+) binding. The active-site Proton acceptor; for phosphorylation activity. Proton donor; for dephosphorylation activity is the Asp177. The interval 201 to 210 (LEVRGLGLLD) is important for the catalytic mechanism of both phosphorylation and dephosphorylation. Glu202 serves as a coordination point for Mg(2+). Residue Arg243 is part of the active site. Positions 264–269 (QVAAGR) are important for the catalytic mechanism of dephosphorylation.

This sequence belongs to the HPrK/P family. As to quaternary structure, homohexamer. The cofactor is Mg(2+).

The enzyme catalyses [HPr protein]-L-serine + ATP = [HPr protein]-O-phospho-L-serine + ADP + H(+). The catalysed reaction is [HPr protein]-O-phospho-L-serine + phosphate + H(+) = [HPr protein]-L-serine + diphosphate. Its function is as follows. Catalyzes the ATP- as well as the pyrophosphate-dependent phosphorylation of a specific serine residue in HPr, a phosphocarrier protein of the phosphoenolpyruvate-dependent sugar phosphotransferase system (PTS). HprK/P also catalyzes the pyrophosphate-producing, inorganic phosphate-dependent dephosphorylation (phosphorolysis) of seryl-phosphorylated HPr (P-Ser-HPr). The chain is HPr kinase/phosphorylase from Bordetella pertussis (strain Tohama I / ATCC BAA-589 / NCTC 13251).